A 330-amino-acid chain; its full sequence is 2-keto-3-deoxygluconate permease (330 aa).

10 helical membrane passes run 10–30, 42–62, 77–97, 100–120, 140–160, 163–183, 200–220, 224–244, 254–274, and 289–309; these read VPGGMMIIPLFLGAALNTFAP, ALITGTLPILGVFIFCVGATI, LLLGKIGFAALLGVIAAQFIP, GIQSGFFAGLSVLAIVAVMNE, GAFAFISTESGPFMTMVTFGV, LAAFPWETLAATVIPFLLGCI, PAIIPFFAFSLGNTLNFGMLI, LLGIFIGVSVVILSGSSLFLL, VAGVAASSTAGAAVAVPYALA, and AIIATSVIVTSLLTPLATVWV.

This sequence belongs to the KdgT transporter family.

Its subcellular location is the cell membrane. The enzyme catalyses 2-dehydro-3-deoxy-D-gluconate(in) + H(+)(in) = 2-dehydro-3-deoxy-D-gluconate(out) + H(+)(out). Functionally, catalyzes the proton-dependent uptake of 2-keto-3-deoxygluconate (KDG) into the cell. The chain is 2-keto-3-deoxygluconate permease from Bacillus subtilis (strain 168).